The following is a 748-amino-acid chain: NAD(P)H-quinone oxidoreductase subunit 5, chloroplastic (748 aa).

A run of 16 helical transmembrane segments spans residues 9 to 29 (WIIP…LLLV), 40 to 60 (WAFP…DLSI), 89 to 109 (IDPL…MVLV), 121 to 140 (YLRF…GLVT), 147 to 167 (IYIF…FWFT), 185 to 205 (GDFG…SFEF), 224 to 244 (LFVT…SAQF), 258 to 278 (TPIS…FLVA), 280 to 300 (LFPL…IGII), 327 to 347 (LGYT…FHLI), 354 to 374 (ALLF…VGYS), 396 to 416 (TAFL…CFWS), 425 to 445 (WLYS…TAFY), 551 to 571 (LLPL…GIPF), 605 to 625 (FITN…IASL), and 726 to 746 (YLFL…FLFL).

The protein belongs to the complex I subunit 5 family. In terms of assembly, NDH is composed of at least 16 different subunits, 5 of which are encoded in the nucleus.

It localises to the plastid. Its subcellular location is the chloroplast thylakoid membrane. It carries out the reaction a plastoquinone + NADH + (n+1) H(+)(in) = a plastoquinol + NAD(+) + n H(+)(out). It catalyses the reaction a plastoquinone + NADPH + (n+1) H(+)(in) = a plastoquinol + NADP(+) + n H(+)(out). Its function is as follows. NDH shuttles electrons from NAD(P)H:plastoquinone, via FMN and iron-sulfur (Fe-S) centers, to quinones in the photosynthetic chain and possibly in a chloroplast respiratory chain. The immediate electron acceptor for the enzyme in this species is believed to be plastoquinone. Couples the redox reaction to proton translocation, and thus conserves the redox energy in a proton gradient. The polypeptide is NAD(P)H-quinone oxidoreductase subunit 5, chloroplastic (ndhF) (Platanus occidentalis (Sycamore)).